Consider the following 832-residue polypeptide: FAST kinase domain-containing protein 1, mitochondrial (832 aa).

The RAP domain occupies 765–825; it reads VAIEFLDSKA…KDAWMDYLRK (61 aa).

It belongs to the FAST kinase family.

It is found in the mitochondrion. Functionally, may regulate the stability of some mitochondrial mRNA species. This Xenopus laevis (African clawed frog) protein is FAST kinase domain-containing protein 1, mitochondrial (fastkd1).